The primary structure comprises 243 residues: Aquaporin SIP1-2 (243 aa).

2 helical membrane passes run 9–29 (AAAADAVVTFLWVLCVSTLGA) and 45–65 (FALLVTVSLLSVLLFVFNILC). An NPA 1 motif is present at residues 74 to 76 (NPT). Helical transmembrane passes span 98–118 (LPAQAAGAVGGALAISELMPA), 136–156 (GAGAELVLTFVITLAVLLIIV), and 163–183 (IIKTWMISICTLCLVLSGAAY). Positions 189–191 (NPA) match the NPA 2 motif. A helical membrane pass occupies residues 211-231 (VYWICPFIGAILAAWIFRAMF).

It belongs to the MIP/aquaporin (TC 1.A.8) family. SIP (TC 1.A.8.10) subfamily.

It is found in the membrane. Functionally, aquaporins facilitate the transport of water and small neutral solutes across cell membranes. The chain is Aquaporin SIP1-2 (SIP1-2) from Zea mays (Maize).